A 76-amino-acid polypeptide reads, in one-letter code: Attractin (76 aa).

A signal peptide spans methionine 1–alanine 18. 3 cysteine pairs are disulfide-bonded: cysteine 22/cysteine 59, cysteine 31/cysteine 51, and cysteine 38/cysteine 44. An N-linked (GlcNAc...) asparagine glycan is attached at asparagine 26.

Binds to temptin and enticin. In terms of tissue distribution, produced by the albumen gland of the egg cordons.

It localises to the secreted. In terms of biological role, water-borne pheromone that attract the marine mollusk Aplysia into breeding aggregations and coordinate male and female reproductive behavior within the aggregation. The protein is Attractin (ATT) of Aplysia californica (California sea hare).